We begin with the raw amino-acid sequence, 1084 residues long: Putative tRNA-specific 2-thiouridylase (1084 aa).

The next 3 helical transmembrane spans lie at 1–21, 32–52, and 309–329; these read MLIF…FILT, FIIS…FYVI, and IITI…YLIL. The Nucleophile role is filled by Cys538. Cys538 and Cys715 are joined by a disulfide. The Cysteine persulfide intermediate role is filled by Cys715.

This sequence belongs to the MnmA/TRMU family.

The protein resides in the plastid. Its subcellular location is the apicoplast. It localises to the membrane. It carries out the reaction S-sulfanyl-L-cysteinyl-[protein] + uridine(34) in tRNA + AH2 + ATP = 2-thiouridine(34) in tRNA + L-cysteinyl-[protein] + A + AMP + diphosphate + H(+). In terms of biological role, catalyzes the 2-thiolation of uridine at the wobble position (U34) of tRNA, leading to the formation of s(2)U34. Required for apicoplast maintenance. This Plasmodium falciparum (isolate 3D7) protein is Putative tRNA-specific 2-thiouridylase.